The chain runs to 82 residues: Translational regulator CsrA (82 aa).

Belongs to the CsrA/RsmA family. In terms of assembly, homodimer; the beta-strands of each monomer intercalate to form a hydrophobic core, while the alpha-helices form wings that extend away from the core.

It localises to the cytoplasm. Its function is as follows. A translational regulator that binds mRNA to regulate translation initiation and/or mRNA stability. Usually binds in the 5'-UTR at or near the Shine-Dalgarno sequence preventing ribosome-binding, thus repressing translation. Its main target seems to be the major flagellin gene, while its function is anatagonized by FliW. This chain is Translational regulator CsrA, found in Geobacillus sp. (strain WCH70).